The following is a 156-amino-acid chain: MARMHTRRRGSSDSDKPAADEPPEWSDVDEDAIEARVVELAEQGHSPSEIGLKLRDEGVQGTPIPDVSLATGKKVTEILEENEAEPDLPEDLRNLLERAVRLRDHMDENPGDYQNKRALQNTQSKIRRLIDYYRGDEVDENFTYSYDNAVEALGLE.

The tract at residues 1–67 is disordered; sequence MARMHTRRRG…GVQGTPIPDV (67 aa). The segment covering 10-19 has biased composition (basic and acidic residues); that stretch reads GSSDSDKPAA. Residues 21-32 are compositionally biased toward acidic residues; that stretch reads EPPEWSDVDEDA.

The protein belongs to the universal ribosomal protein uS15 family. Part of the 30S ribosomal subunit.

This Haloarcula marismortui (strain ATCC 43049 / DSM 3752 / JCM 8966 / VKM B-1809) (Halobacterium marismortui) protein is Small ribosomal subunit protein uS15.